The sequence spans 119 residues: Protein TusC (119 aa).

The protein belongs to the DsrF/TusC family. In terms of assembly, heterohexamer, formed by a dimer of trimers. The hexameric TusBCD complex contains 2 copies each of TusB, TusC and TusD. The TusBCD complex interacts with TusE.

It localises to the cytoplasm. In terms of biological role, part of a sulfur-relay system required for 2-thiolation of 5-methylaminomethyl-2-thiouridine (mnm(5)s(2)U) at tRNA wobble positions. This chain is Protein TusC, found in Buchnera aphidicola subsp. Schizaphis graminum (strain Sg).